A 584-amino-acid chain; its full sequence is 2-succinyl-5-enolpyruvyl-6-hydroxy-3-cyclohexene-1-carboxylate synthase (584 aa).

It belongs to the TPP enzyme family. MenD subfamily. Homodimer. Mg(2+) is required as a cofactor. It depends on Mn(2+) as a cofactor. Requires thiamine diphosphate as cofactor.

It catalyses the reaction isochorismate + 2-oxoglutarate + H(+) = 5-enolpyruvoyl-6-hydroxy-2-succinyl-cyclohex-3-ene-1-carboxylate + CO2. Its pathway is quinol/quinone metabolism; 1,4-dihydroxy-2-naphthoate biosynthesis; 1,4-dihydroxy-2-naphthoate from chorismate: step 2/7. The protein operates within quinol/quinone metabolism; menaquinone biosynthesis. In terms of biological role, catalyzes the thiamine diphosphate-dependent decarboxylation of 2-oxoglutarate and the subsequent addition of the resulting succinic semialdehyde-thiamine pyrophosphate anion to isochorismate to yield 2-succinyl-5-enolpyruvyl-6-hydroxy-3-cyclohexene-1-carboxylate (SEPHCHC). The polypeptide is 2-succinyl-5-enolpyruvyl-6-hydroxy-3-cyclohexene-1-carboxylate synthase (Bacillus anthracis).